We begin with the raw amino-acid sequence, 260 residues long: Serine protease VLSP-1 (260 aa).

Positions 1–18 (MVLIRVLANLLVLHLSYA) are cleaved as a signal peptide. The propeptide occupies 19-24 (QKSSEL). The Peptidase S1 domain maps to 25–251 (VIGGDECNIN…YSDWIQSIIA (227 aa)). Cystine bridges form between Cys31–Cys165, Cys52–Cys68, Cys100–Cys258, Cys144–Cys212, Cys176–Cys191, and Cys202–Cys227. Asn44 carries N-linked (GlcNAc...) asparagine glycosylation. Catalysis depends on His67, which acts as the Charge relay system. A glycan (N-linked (GlcNAc...) asparagine) is linked at Asn103. Catalysis depends on Asp112, which acts as the Charge relay system. Asn156 carries N-linked (GlcNAc...) asparagine glycosylation. The active-site Charge relay system is the Ser206.

The protein belongs to the peptidase S1 family. Snake venom subfamily. As to expression, expressed by the venom gland.

It is found in the secreted. Snake venom serine protease that may act in the hemostasis system of the prey. The chain is Serine protease VLSP-1 from Macrovipera lebetinus (Levantine viper).